We begin with the raw amino-acid sequence, 206 residues long: Large ribosomal subunit protein uL4 (206 aa).

Residues 43–78 (ARSGNRKQKDREEVKHTTKKPWRQKGTGRARAGMSS) are disordered. The span at 49 to 58 (KQKDREEVKH) shows a compositional bias: basic and acidic residues. Positions 59–70 (TTKKPWRQKGTG) are enriched in basic residues.

The protein belongs to the universal ribosomal protein uL4 family. In terms of assembly, part of the 50S ribosomal subunit.

Functionally, one of the primary rRNA binding proteins, this protein initially binds near the 5'-end of the 23S rRNA. It is important during the early stages of 50S assembly. It makes multiple contacts with different domains of the 23S rRNA in the assembled 50S subunit and ribosome. In terms of biological role, forms part of the polypeptide exit tunnel. In Ralstonia nicotianae (strain ATCC BAA-1114 / GMI1000) (Ralstonia solanacearum), this protein is Large ribosomal subunit protein uL4.